A 235-amino-acid polypeptide reads, in one-letter code: MAHGRNIRKRTFSVMDTLSDKNIGIHTNSLPKNILCRRILFKGKISKYSIFNDNLAKDHSSNRSMSIDSLTGKKRPHDISFQNMNSSMPSSTQKKTKILDEEIKDQSSSNENDRDSPVIVDITLKPSYMPKTSRITEIIHKMKELNMNRIEDGLSFNKKRSEHDAKNVLLHTMEMEEDCEIEEDIAIDSPYLNTSLSEDDTESIVETDYSEEEKESISETESSSDDESYSLYDSF.

2 disordered regions span residues 60–96 and 192–235; these read SSNR…QKKT and LNTS…YDSF. Polar residues predominate over residues 80 to 93; the sequence is SFQNMNSSMPSSTQ. The span at 197–214 shows a compositional bias: acidic residues; it reads SEDDTESIVETDYSEEEK.

This sequence belongs to the asfivirus DP238L family.

This is an uncharacterized protein from Ornithodoros (relapsing fever ticks).